The chain runs to 447 residues: Asparagine--tRNA ligase (447 aa).

This sequence belongs to the class-II aminoacyl-tRNA synthetase family. As to quaternary structure, homodimer.

It localises to the cytoplasm. The catalysed reaction is tRNA(Asn) + L-asparagine + ATP = L-asparaginyl-tRNA(Asn) + AMP + diphosphate + H(+). This Lactococcus lactis subsp. cremoris (strain SK11) protein is Asparagine--tRNA ligase.